The sequence spans 150 residues: Arginine repressor (150 aa).

Belongs to the ArgR family.

It is found in the cytoplasm. Its pathway is amino-acid biosynthesis; L-arginine biosynthesis [regulation]. Its function is as follows. Regulates arginine biosynthesis genes. In Staphylococcus haemolyticus (strain JCSC1435), this protein is Arginine repressor.